Reading from the N-terminus, the 342-residue chain is Isopentenyl-diphosphate delta-isomerase (342 aa).

11–12 is a substrate binding site; sequence RK. Residues Ser68, 69-71, Ser99, and Asn127 contribute to the FMN site; that span reads SMT. 99 to 101 is a binding site for substrate; that stretch reads SMR. Gln162 contacts substrate. Glu163 is a Mg(2+) binding site. FMN-binding positions include Lys194, Thr224, 274–276, and 295–296; these read GLK and AG.

This sequence belongs to the IPP isomerase type 2 family. As to quaternary structure, homooctamer. Dimer of tetramers. The cofactor is FMN. NADPH is required as a cofactor. It depends on Mg(2+) as a cofactor.

It localises to the cytoplasm. It carries out the reaction isopentenyl diphosphate = dimethylallyl diphosphate. Its function is as follows. Involved in the biosynthesis of isoprenoids. Catalyzes the 1,3-allylic rearrangement of the homoallylic substrate isopentenyl (IPP) to its allylic isomer, dimethylallyl diphosphate (DMAPP). The chain is Isopentenyl-diphosphate delta-isomerase from Rickettsia rickettsii (strain Iowa).